The following is a 154-amino-acid chain: MVRRRTASPSPSAPVRSAPRPAAQSSFAAPPPRPAAAAPAYHPPAAPTPMGAPMGAPSQGPGLMKQMAATAGGVAIGSAVGHAVGGMFTGGGSSHAEQAPAAAAAPAGAPQASGYSQPCEFEWRQFVDCAQNQSDVSLCNGFNDIFKQCKARYA.

2 disordered regions span residues 1-64 (MVRR…PGLM) and 86-109 (GMFTGGGSSHAEQAPAAAAAPAGA). 3 stretches are compositionally biased toward low complexity: residues 7 to 28 (ASPSPSAPVRSAPRPAAQSSFA), 48 to 57 (TPMGAPMGAP), and 96 to 109 (AEQAPAAAAAPAGA). One can recognise a CHCH domain in the interval 116–154 (SQPCEFEWRQFVDCAQNQSDVSLCNGFNDIFKQCKARYA). 2 consecutive short sequence motifs (cx9C motif) follow at residues 119 to 129 (CEFEWRQFVDC) and 139 to 149 (CNGFNDIFKQC). Disulfide bonds link C119–C149 and C129–C139.

The polypeptide is Hemiasterlin resistant protein 1 (har-1) (Caenorhabditis elegans).